Here is a 273-residue protein sequence, read N- to C-terminus: Ciliary microtubule inner protein 2B (273 aa).

Disordered stretches follow at residues 59–85 (TLLPPIQSPRSPVISKGRLPPRRGHER) and 123–164 (RHGE…HASP). Residues 123–159 (RHGEQESHQLPDGAKGEREVEEDQLREAEEPPLKQEL) show a composition bias toward basic and acidic residues.

The protein belongs to the CIMIP2 family. As to quaternary structure, microtubule inner protein component of sperm flagellar doublet microtubules. As to expression, expressed in airway epithelial cells.

The protein resides in the cytoplasm. It is found in the cytoskeleton. It localises to the cilium axoneme. Its subcellular location is the flagellum axoneme. Its function is as follows. Microtubule inner protein (MIP) part of the dynein-decorated doublet microtubules (DMTs) in cilia axoneme, which is required for motile cilia beating. This chain is Ciliary microtubule inner protein 2B (Cimip2b), found in Mus musculus (Mouse).